The primary structure comprises 108 residues: UPF0060 membrane protein KPK_2870 (108 aa).

The next 4 helical transmembrane spans lie at 6–26 (LLFFATALCEIIGCYLPWLWL), 29–49 (GATPLLLIPTGLALALFVWLL), 61–81 (AAYGGVYVCTALLWLRVVDGV), and 86–106 (YDWAGAIIALCGMLIIVAGWG).

Belongs to the UPF0060 family.

The protein resides in the cell inner membrane. The polypeptide is UPF0060 membrane protein KPK_2870 (Klebsiella pneumoniae (strain 342)).